The primary structure comprises 426 residues: GATA type zinc finger protein asd-4 (426 aa).

The GATA-type zinc finger occupies 16–40 (CQNCATSTTPLWRRDEMGQVLCNAC). Disordered stretches follow at residues 70–143 (RPDL…NPHI) and 159–178 (PGFGVPTASPGRAPSPMNGE). A compositionally biased stretch (low complexity) spans 104-113 (PNNPAAAARR). Residues 128 to 138 (SPVSRTGTPNV) are compositionally biased toward polar residues. Residues 182–292 (QTHEQLLAAN…QDNGRHKKIR (111 aa)) adopt a coiled-coil conformation. The segment covering 306 to 318 (VEPQQPEQQQPAP) has biased composition (low complexity). The disordered stretch occupies residues 306–426 (VEPQQPEQQQ…PVEEAPKAES (121 aa)). Residues 335–353 (APAPAPEAAPEQAPAPAPE) show a composition bias toward pro residues. Residues 354–419 (PVQEQAQEPE…SEPPTTAPVE (66 aa)) are compositionally biased toward low complexity.

As to quaternary structure, homotetramer.

The protein resides in the nucleus. Functionally, transcriptional regulator that functions in sexual development; disruption of asd-4 gene results in agenesis of ascus and ascospore with macroscopically normal fruiting body formation. The GATA-type zinc finger domain binds to DNA sequences from its own promoter region. The protein is GATA type zinc finger protein asd-4 (asd-4) of Neurospora crassa (strain ATCC 24698 / 74-OR23-1A / CBS 708.71 / DSM 1257 / FGSC 987).